The primary structure comprises 323 residues: Calcium homeostasis modulator protein 2 (323 aa).

The Cytoplasmic segment spans residues M1–V21. A central pore region spans residues L14–F39. Residues M22–A43 traverse the membrane as a helical segment. The Extracellular segment spans residues F44–R52. Cystine bridges form between C46/C130 and C48/C162. Residues N53 to N76 traverse the membrane as a helical segment. Over N77–L101 the chain is Cytoplasmic. Residues L102–L132 form a helical membrane-spanning segment. Residues S133 to R179 lie on the Extracellular side of the membrane. The segment at E145 to H152 is hemichannel docking. The chain crosses the membrane as a helical span at residues L180–K206. Residues H207–S323 are Cytoplasmic-facing. The tract at residues Y214 to F251 is intersubunit interaction.

This sequence belongs to the CALHM family. In terms of assembly, homo-undecamer. Two undecameric hemichannels can assemble in a head-to-head manner to form a gap junction. In terms of tissue distribution, placenta.

It localises to the cell membrane. It catalyses the reaction ATP(in) = ATP(out). With respect to regulation, inhibited by Ca(2+) and ruthenium red in a voltage-dependent way. Its function is as follows. Pore-forming subunit of Ca(2+) homeostasis modulator channels. Mediates ATP release from astrocytes and ATP-induced Ca(2+) influx in microglia thus regulating neuronal ATP and Ca(2+) homeostasis, synaptic transmission and neuroinflammatory response. May form intercellular gap junctions. The gating mechanism remains unknown. The protein is Calcium homeostasis modulator protein 2 of Homo sapiens (Human).